A 364-amino-acid chain; its full sequence is Methylthioribose-1-phosphate isomerase (364 aa).

Aspartate 254 (proton donor) is an active-site residue.

Belongs to the eIF-2B alpha/beta/delta subunits family. MtnA subfamily.

It is found in the cytoplasm. The protein localises to the nucleus. The catalysed reaction is 5-(methylsulfanyl)-alpha-D-ribose 1-phosphate = 5-(methylsulfanyl)-D-ribulose 1-phosphate. It functions in the pathway amino-acid biosynthesis; L-methionine biosynthesis via salvage pathway; L-methionine from S-methyl-5-thio-alpha-D-ribose 1-phosphate: step 1/6. Catalyzes the interconversion of methylthioribose-1-phosphate (MTR-1-P) into methylthioribulose-1-phosphate (MTRu-1-P). The polypeptide is Methylthioribose-1-phosphate isomerase (Drosophila melanogaster (Fruit fly)).